The sequence spans 230 residues: Large ribosomal subunit protein uL1 (230 aa).

Belongs to the universal ribosomal protein uL1 family. As to quaternary structure, part of the 50S ribosomal subunit.

Its function is as follows. Binds directly to 23S rRNA. The L1 stalk is quite mobile in the ribosome, and is involved in E site tRNA release. Functionally, protein L1 is also a translational repressor protein, it controls the translation of the L11 operon by binding to its mRNA. In Leptospira interrogans serogroup Icterohaemorrhagiae serovar copenhageni (strain Fiocruz L1-130), this protein is Large ribosomal subunit protein uL1.